The sequence spans 188 residues: dCTP deaminase (188 aa).

DCTP-binding positions include 111 to 116, 135 to 137, Q156, Y170, and Q180; these read KSTYAR and TLE. Catalysis depends on E137, which acts as the Proton donor/acceptor.

Belongs to the dCTP deaminase family. Homotrimer.

It carries out the reaction dCTP + H2O + H(+) = dUTP + NH4(+). The protein operates within pyrimidine metabolism; dUMP biosynthesis; dUMP from dCTP (dUTP route): step 1/2. In terms of biological role, catalyzes the deamination of dCTP to dUTP. This chain is dCTP deaminase, found in Nitrosococcus oceani (strain ATCC 19707 / BCRC 17464 / JCM 30415 / NCIMB 11848 / C-107).